Consider the following 330-residue polypeptide: Aspartate--ammonia ligase (330 aa).

It belongs to the class-II aminoacyl-tRNA synthetase family. AsnA subfamily.

The protein resides in the cytoplasm. It catalyses the reaction L-aspartate + NH4(+) + ATP = L-asparagine + AMP + diphosphate + H(+). The protein operates within amino-acid biosynthesis; L-asparagine biosynthesis; L-asparagine from L-aspartate (ammonia route): step 1/1. This chain is Aspartate--ammonia ligase, found in Shigella dysenteriae serotype 1 (strain Sd197).